We begin with the raw amino-acid sequence, 148 residues long: Basic leucine zipper 4 (148 aa).

A bZIP domain is found at 48 to 97 (DDKKRRRTISNRESAKRSRMKKKKRFEELTEEVNRLNIRNQELKNRLANV). A disordered region spans residues 50–70 (KKRRRTISNRESAKRSRMKKK). Residues 50 to 72 (KKRRRTISNRESAKRSRMKKKKR) form a basic motif region. Residues 76–90 (LTEEVNRLNIRNQEL) form a leucine-zipper region.

It localises to the nucleus. Functionally, probable transcription factor involved in somatic embryogenesis. Acts as a positive regulator of BHLH109. This is Basic leucine zipper 4 from Arabidopsis thaliana (Mouse-ear cress).